Consider the following 882-residue polypeptide: Nucleoporin NUP82 (882 aa).

Residues 76-98 (WESRPSRSSVGPTSTKKDSSDFD) form a disordered region. Coiled coils occupy residues 676 to 762 (TEVS…GRTT) and 806 to 829 (KRLE…QKVG).

In terms of assembly, component of the nuclear pore complex (NPC). NPC constitutes the exclusive means of nucleocytoplasmic transport. NPCs allow the passive diffusion of ions and small molecules and the active, nuclear transport receptor-mediated bidirectional transport of macromolecules such as proteins, RNAs, ribonucleoparticles (RNPs), and ribosomal subunits across the nuclear envelope. Due to its 8-fold rotational symmetry, all subunits are present with 8 copies or multiples thereof.

It localises to the nucleus. The protein resides in the nuclear pore complex. Its subcellular location is the nucleus membrane. In terms of biological role, functions as a component of the nuclear pore complex (NPC). NPC components, collectively referred to as nucleoporins (NUPs), can play the role of both NPC structural components and of docking or interaction partners for transiently associated nuclear transport factors. In Chaetomium thermophilum (strain DSM 1495 / CBS 144.50 / IMI 039719) (Thermochaetoides thermophila), this protein is Nucleoporin NUP82 (NUP82).